The chain runs to 470 residues: Argininosuccinate lyase (470 aa).

It belongs to the lyase 1 family. Argininosuccinate lyase subfamily.

It localises to the cytoplasm. It catalyses the reaction 2-(N(omega)-L-arginino)succinate = fumarate + L-arginine. The protein operates within amino-acid biosynthesis; L-arginine biosynthesis; L-arginine from L-ornithine and carbamoyl phosphate: step 3/3. The chain is Argininosuccinate lyase from Ehrlichia chaffeensis (strain ATCC CRL-10679 / Arkansas).